Here is a 525-residue protein sequence, read N- to C-terminus: Coronin-2A (525 aa).

WD repeat units follow at residues 24–71 (NCYD…TGKL), 72–122 (DPHY…RNLT), 123–170 (AYRK…SVIT), 171–214 (SPMS…AGTV), 215–259 (LQEA…DNLS), 260–305 (VPLM…ADKP), and 306–342 (HLSY…RFYK). A coiled-coil region spans residues 485 to 524 (QMFYRQQEEIRRLRELLTQREVQAKQLELEIKNLRMGSEQ).

It belongs to the WD repeat coronin family. In terms of assembly, binds actin. Component of the N-Cor repressor complex, at least composed of NCOR1, NCOR2, HDAC3, TBL1X, TBL1R, CORO2A and GPS2.

This chain is Coronin-2A (CORO2A), found in Homo sapiens (Human).